Here is a 109-residue protein sequence, read N- to C-terminus: Oncomodulin (109 aa).

Residue Ser-2 is modified to N-acetylserine. EF-hand domains lie at 39 to 74 (MSAS…FQSD) and 78 to 109 (LTES…MVHS). Ca(2+) is bound by residues Asp-52, Asp-54, Ser-56, Tyr-58, Glu-63, Asp-91, Asp-93, Asp-95, Lys-97, and Glu-102.

Belongs to the parvalbumin family. Found in tumor tissues and not detected in normal tissues.

In terms of biological role, has some calmodulin-like activity with respect to enzyme activation and growth regulation. Binds two calcium ions. This chain is Oncomodulin (Ocm), found in Rattus norvegicus (Rat).